Here is a 2175-residue protein sequence, read N- to C-terminus: Non-reducing polyketide synthase PKS1 (2175 aa).

The N-terminal acylcarrier protein transacylase domain (SAT) stretch occupies residues 5–242 (LLFGDQTAEQ…VSIPIYGPYH (238 aa)). One can recognise a Ketosynthase family 3 (KS3) domain in the interval 369-801 (TDKIAIVGMA…GGNTALLIED (433 aa)). Catalysis depends on for beta-ketoacyl synthase activity residues Cys541, His676, and His719. The malonyl-CoA:ACP transacylase (MAT) domain stretch occupies residues 900-1212 (FCFTGQGSQY…ISTSICHLFT (313 aa)). Catalysis depends on Ser988, which acts as the For acyl/malonyl transferase activity. The product template (PT) domain stretch occupies residues 1285 to 1604 (STSCQNVISE…RKVLNVFLPP (320 aa)). The interval 1289-1424 (QNVISEEFDG…CTIRYEDKAV (136 aa)) is N-terminal hotdog fold. Positions 1289–1599 (QNVISEEFDG…FQQIPRKVLN (311 aa)) constitute a PKS/mFAS DH domain. The active-site Proton acceptor; for dehydratase activity is His1321. Residues 1452-1599 (AHKVQRGMAY…FQQIPRKVLN (148 aa)) form a C-terminal hotdog fold region. Asp1512 (proton donor; for dehydratase activity) is an active-site residue. The segment at 1640-1664 (PVRKSAGPAKAAAAPSMPKPSKVAA) is disordered. Residues 1643–1664 (KSAGPAKAAAAPSMPKPSKVAA) show a composition bias toward low complexity. The Carrier 1 domain maps to 1666–1743 (KPAGSMVDKV…EMKKYFSQFN (78 aa)). Ser1703 is modified (O-(pantetheine 4'-phosphoryl)serine). The segment at 1766–1804 (ATPFDEMSTPASSAPSVPQSDAGKPSPDSPTGDSLSDDV) is disordered. Polar residues predominate over residues 1774-1784 (TPASSAPSVPQ). The Carrier 2 domain maps to 1801-1878 (SDDVGDVSIA…DIENALGMRP (78 aa)). At Ser1838 the chain carries O-(pantetheine 4'-phosphoryl)serine. Residues 1879–1899 (KPKAVGPKLSKPSTKTDMNEV) are disordered. Residues 1889 to 1899 (KPSTKTDMNEV) are compositionally biased toward polar residues. The segment at 1932–2158 (KVFFLPDGSG…GHHFSMMKDP (227 aa)) is claisen cyclase domain. The active-site For Claisen cyclase activity is the Ser2002.

The cofactor is pantetheine 4'-phosphate.

It carries out the reaction 6 malonyl-CoA + acetyl-CoA + 6 H(+) = naphtopyrone YWA1 + 6 CO2 + 7 CoA + H2O. Its pathway is pigment biosynthesis; melanin biosynthesis. Its function is as follows. Non-reducing polyketide synthase; part of the gene cluster 29 that mediates the biosynthesis of mediates the biosynthesis of dihydroxynaphthalene (DHN)-melanin, a bluish-green pigment and a structural component of the conidial wall. The first step of the pathway is the production of the heptaketide naphtopyrone YWA1 by the polyketide synthase PKS1 though condensation of acetyl-CoA with malonyl-CoA. In Zymoseptoria tritici (strain CBS 115943 / IPO323) (Speckled leaf blotch fungus), this protein is Non-reducing polyketide synthase PKS1.